A 135-amino-acid polypeptide reads, in one-letter code: Mu-like prophage FluMu protein gp46 (135 aa).

It to phage Mu protein gp46.

This is Mu-like prophage FluMu protein gp46 from Haemophilus influenzae (strain ATCC 51907 / DSM 11121 / KW20 / Rd).